The following is a 70-amino-acid chain: Neuropeptide SIFamide (70 aa).

A signal peptide spans 1 to 22 (MRFIVALCLFAIVMCIIHKAEG). Residue F34 is modified to Phenylalanine amide. A propeptide spanning residues 38-70 (GVVEYDTTGRALSALCEIASETCQAWYQTLENK) is cleaved from the precursor.

Expressed in antennal lobe (AL) and gnathal ganglion (GNG) with expression detected in most animals (at protein level). Not expressed in corpora cardiaca (CC) and corpora allata (CA) (at protein level).

Its subcellular location is the secreted. In terms of biological role, ligand for the neuropeptide SIFamide receptor. The chain is Neuropeptide SIFamide from Agrotis ipsilon (Black cutworm moth).